A 487-amino-acid polypeptide reads, in one-letter code: Fatty acid desaturase 2-like protein FADS2B (487 aa).

Basic and acidic residues predominate over residues 1-11; it reads MKLEEKLEHNE. The interval 1 to 20 is disordered; that stretch reads MKLEEKLEHNESLVGKSRPC. Residues 1-175 lie on the Cytoplasmic side of the membrane; it reads MKLEEKLEHN…AMNMFSANLR (175 aa). The 78-residue stretch at 62–139 folds into the Cytochrome b5 heme-binding domain; sequence LNLYTWQEIQ…LKPLLIGELS (78 aa). The heme site is built by His97 and His120. The chain crosses the membrane as a helical span at residues 176–196; it reads FFFLHLAQILILEISAWLILH. The Lumenal portion of the chain corresponds to 197–201; that stretch reads HFGSS. The helical transmembrane segment at 202-222 threads the bilayer; the sequence is WLVTILISFLLTVSQAQCSFL. Residues 223-307 are Cytoplasmic-facing; the sequence is QHDLGHLSMF…IKYIDYEKQH (85 aa). The Histidine box-1 motif lies at 224–228; that stretch reads HDLGH. The Histidine box-2 motif lies at 261–265; that stretch reads HFQHH. Residues 308-328 form a helical membrane-spanning segment; the sequence is LYFYMVALPFLMPVYFNLQSM. Topologically, residues 329 to 349 are lumenal; that stretch reads QVMYLRKYWMDIAWVSSFYIR. Residues 350-370 form a helical membrane-spanning segment; that stretch reads YFITFGPFYGIFGTVLLIYLV. The Cytoplasmic portion of the chain corresponds to 371–487; the sequence is KFIESPWIAY…ASLWMNAYYE (117 aa). Residues 426–430 carry the Histidine box-3 motif; sequence QIEHH.

It belongs to the fatty acid desaturase type 1 family.

The protein resides in the endoplasmic reticulum membrane. It functions in the pathway lipid metabolism; polyunsaturated fatty acid biosynthesis. This is Fatty acid desaturase 2-like protein FADS2B from Mus musculus (Mouse).